A 400-amino-acid polypeptide reads, in one-letter code: TBC1 domain family member 13 (400 aa).

A Rab-GAP TBC domain is found at 35 to 345 (PCEGGLRCLC…RIWDSLFADD (311 aa)).

As to quaternary structure, interacts with RAB1A and RAB10; in a GTP-dependent manner.

Its subcellular location is the membrane. The protein localises to the cytoplasm. In terms of biological role, acts as a GTPase-activating protein for RAB35. Together with RAB35 may be involved in regulation of insulin-induced glucose transporter SLC2A4/GLUT4 translocation to the plasma membrane in adipocytes. The polypeptide is TBC1 domain family member 13 (TBC1D13) (Homo sapiens (Human)).